The sequence spans 389 residues: S-adenosylmethionine synthase (389 aa).

Histidine 17 lines the ATP pocket. Aspartate 19 is a binding site for Mg(2+). Glutamate 45 provides a ligand contact to K(+). Positions 58 and 102 each coordinate L-methionine. A flexible loop region spans residues 102-112 (QSADIAQGVDA). Residues 167–169 (DAK), aspartate 241, 247–248 (RK), alanine 264, and lysine 268 each bind ATP. Position 241 (aspartate 241) interacts with L-methionine. Lysine 272 is a binding site for L-methionine.

The protein belongs to the AdoMet synthase family. In terms of assembly, homotetramer; dimer of dimers. Mg(2+) is required as a cofactor. The cofactor is K(+).

The protein resides in the cytoplasm. The catalysed reaction is L-methionine + ATP + H2O = S-adenosyl-L-methionine + phosphate + diphosphate. The protein operates within amino-acid biosynthesis; S-adenosyl-L-methionine biosynthesis; S-adenosyl-L-methionine from L-methionine: step 1/1. In terms of biological role, catalyzes the formation of S-adenosylmethionine (AdoMet) from methionine and ATP. The overall synthetic reaction is composed of two sequential steps, AdoMet formation and the subsequent tripolyphosphate hydrolysis which occurs prior to release of AdoMet from the enzyme. This is S-adenosylmethionine synthase from Parvibaculum lavamentivorans (strain DS-1 / DSM 13023 / NCIMB 13966).